Here is a 54-residue protein sequence, read N- to C-terminus: uncharacterized protein (54 aa).

A helical transmembrane segment spans residues 6 to 26 (ILIYLLIFVAGIVIGKIRINV).

It is found in the host membrane. This is an uncharacterized protein from Acidianus convivator (ABV).